The following is a 784-amino-acid chain: MTKKLALKRKGKDAEPTNEVVASSEASENEEEEEDLLQAVKDPGEDSTDDEGIDQEYHSDSSEELQFESDEEGNYLGRKQSSSAEEDEESSDEDDDEEEGSSDEEGEEDEEKDSKSKQADDKPSSSGAASKKAPTTELSKRDTSKPEYQDSDTSDEEDIRNTVGNIPMHWYDEYKHIGYDWDAKKIIKPPQGDQIDEFLRKIEDPDFWRTVKDPLTGQDVRLTDEDIALIKRIVSGRIPNKDHEEYEPWIEWFTSEVEKMPIKNVPDHKRSFLPSVSEKKRVSRMVHALKMGWMKTTEEVEREKQAKRGPKFYMLWETDTSREHMRRIHDPVSAPKRDLPGHAESYNPPPEYLFDAKETKEWLKLKDEPHKRKLHFMPQKFKSLREVPAYSRYLRERFLRCLDLYLCPRAKRVKLNIDAEYLIPKLPSPRDLQPFPTVESMVYRGHTDLVRSVSVEPKGEYLVSGSDDKTVKIWEIATGRCIRTIETDEVVRCVAWCPNPKLSIIAVATGNRLLLVNPKVGDKVLVKKTDDLLAEAPSQDVIESERIKTAVQWSNAEADEQEKGVRVVITHFKPIRQVTWHGRGDYLATVMPEGANRSALIHQLSKRRSQIPFSKSKGLIQFVLFHPVKPCFFVATQHNIRIYDLVKQELVKKLLTNSKWISGMSIHPKGDNLLVSTYDKKMLWFDLDLSTKPYQTMRLHRNAVRSVAFHLRYPLFASGSDDQAVIVSHGMVYNDLLQNPLIVPLKKLQTHEKRDEFGVLDVNWHPVQPWIFSTGADSTIRLYT.

The span at 1–11 (MTKKLALKRKG) shows a compositional bias: basic residues. Residues 1 to 159 (MTKKLALKRK…DSDTSDEEDI (159 aa)) form a disordered region. Composition is skewed to acidic residues over residues 27 to 36 (SENEEEEEDL), 45 to 54 (EDSTDDEGID), 62 to 73 (SEELQFESDEEG), and 84 to 111 (AEEDEESSDEDDDEEEGSSDEEGEEDEE). Positions 112–123 (KDSKSKQADDKP) are enriched in basic and acidic residues. A compositionally biased stretch (low complexity) spans 124 to 133 (SSSGAASKKA). The span at 138–148 (LSKRDTSKPEY) shows a compositional bias: basic and acidic residues. A compositionally biased stretch (acidic residues) spans 149–158 (QDSDTSDEED). WD repeat units lie at residues 445–486 (GHTD…RTIE), 488–526 (DEVVRCVAWCPNPKLSIIAVATGNRLLLVNPKVGDKVLV), 570–612 (THFK…SQIP), 615–653 (KSKGLIQFVLFHPVKPCFFVATQHNIRIYDLVKQELVKK), 656–695 (TNSKWISGMSIHPKGDNLLVSTYDKKMLWFDLDLSTKPYQ), 699–738 (LHRNAVRSVAFHLRYPLFASGSDDQAVIVSHGMVYNDLLQ), and 754–784 (RDEFGVLDVNWHPVQPWIFSTGADSTIRLYT).

Belongs to the WD repeat BOP1/ERB1 family.

It is found in the nucleus. The protein resides in the nucleolus. It localises to the nucleoplasm. In terms of biological role, required for maturation of ribosomal RNAs and formation of the large ribosomal subunit. This Drosophila yakuba (Fruit fly) protein is Ribosome biogenesis protein BOP1 homolog.